Consider the following 601-residue polypeptide: Probable HECT-type ubiquitin ligase-interacting protein creD (601 aa).

2 disordered regions span residues 374 to 397 (EVDP…GTLS) and 455 to 489 (SADY…DHDH). Residues 461-473 (PSSGSNSHSPASP) show a composition bias toward low complexity. The span at 475–489 (LSRRPSDEGYHDHDH) shows a compositional bias: basic and acidic residues.

The protein belongs to the arrestin family. Interacts with hulA.

Functionally, component of the regulatory network controlling carbon source utilization through ubiquitination and deubiquitination involving creA, creB, creC, creD and acrB. May be involved in signaling by recognizing appropriately phosphorylated substrates via its arrestin domains and then recruit a HECT-type ubiquitin ligase such as hulA, leading to ubiquitination of the substrate, providing a link between ubiquitination and phosphorylation in protein regulation and stability. The protein is Probable HECT-type ubiquitin ligase-interacting protein creD (creD) of Neosartorya fischeri (strain ATCC 1020 / DSM 3700 / CBS 544.65 / FGSC A1164 / JCM 1740 / NRRL 181 / WB 181) (Aspergillus fischerianus).